Reading from the N-terminus, the 501-residue chain is Carotenoid cleavage oxygenase (501 aa).

Fe cation contacts are provided by H162, H211, H314, and H494.

This sequence belongs to the carotenoid oxygenase family. It depends on Fe(2+) as a cofactor.

In terms of biological role, catalyzes the oxidative cleavage of several carotenoids and apocarotenoids in vitro. This is Carotenoid cleavage oxygenase from Mycobacterium tuberculosis (strain CDC 1551 / Oshkosh).